The primary structure comprises 103 residues: Protein translation factor SUI1 homolog (103 aa).

This sequence belongs to the SUI1 family.

This chain is Protein translation factor SUI1 homolog, found in Methanocaldococcus jannaschii (strain ATCC 43067 / DSM 2661 / JAL-1 / JCM 10045 / NBRC 100440) (Methanococcus jannaschii).